Reading from the N-terminus, the 182-residue chain is Protein Syd (182 aa).

This sequence belongs to the Syd family.

Its subcellular location is the cell inner membrane. Interacts with the SecY protein in vivo. May bind preferentially to an uncomplexed state of SecY, thus functioning either as a chelating agent for excess SecY in the cell or as a regulatory factor that negatively controls the translocase function. The sequence is that of Protein Syd from Pectobacterium carotovorum subsp. carotovorum (strain PC1).